A 288-amino-acid chain; its full sequence is Acetyl-coenzyme A carboxylase carboxyl transferase subunit beta (288 aa).

One can recognise a CoA carboxyltransferase N-terminal domain in the interval 32-288; sequence LFAKCPACKH…LELHTEVENV (257 aa). Residues C36, C39, C54, and C57 each contribute to the Zn(2+) site. The C4-type zinc-finger motif lies at 36–57; the sequence is CPACKHTIYQKDLGKNKVCPNC.

The protein belongs to the AccD/PCCB family. Acetyl-CoA carboxylase is a heterohexamer composed of biotin carboxyl carrier protein (AccB), biotin carboxylase (AccC) and two subunits each of ACCase subunit alpha (AccA) and ACCase subunit beta (AccD). Zn(2+) is required as a cofactor.

Its subcellular location is the cytoplasm. The catalysed reaction is N(6)-carboxybiotinyl-L-lysyl-[protein] + acetyl-CoA = N(6)-biotinyl-L-lysyl-[protein] + malonyl-CoA. It functions in the pathway lipid metabolism; malonyl-CoA biosynthesis; malonyl-CoA from acetyl-CoA: step 1/1. In terms of biological role, component of the acetyl coenzyme A carboxylase (ACC) complex. Biotin carboxylase (BC) catalyzes the carboxylation of biotin on its carrier protein (BCCP) and then the CO(2) group is transferred by the transcarboxylase to acetyl-CoA to form malonyl-CoA. This is Acetyl-coenzyme A carboxylase carboxyl transferase subunit beta from Lactococcus lactis subsp. cremoris (strain SK11).